Consider the following 416-residue polypeptide: UDP-N-acetylglucosamine 1-carboxyvinyltransferase (416 aa).

22–23 contributes to the phosphoenolpyruvate binding site; it reads KN. Arginine 92 is a binding site for UDP-N-acetyl-alpha-D-glucosamine. The active-site Proton donor is the cysteine 116. Cysteine 116 is subject to 2-(S-cysteinyl)pyruvic acid O-phosphothioketal. UDP-N-acetyl-alpha-D-glucosamine-binding positions include 121-125, aspartate 304, and isoleucine 326; that span reads RPVDQ.

It belongs to the EPSP synthase family. MurA subfamily.

The protein localises to the cytoplasm. It catalyses the reaction phosphoenolpyruvate + UDP-N-acetyl-alpha-D-glucosamine = UDP-N-acetyl-3-O-(1-carboxyvinyl)-alpha-D-glucosamine + phosphate. The protein operates within cell wall biogenesis; peptidoglycan biosynthesis. Cell wall formation. Adds enolpyruvyl to UDP-N-acetylglucosamine. This Cupriavidus necator (strain ATCC 17699 / DSM 428 / KCTC 22496 / NCIMB 10442 / H16 / Stanier 337) (Ralstonia eutropha) protein is UDP-N-acetylglucosamine 1-carboxyvinyltransferase.